The chain runs to 226 residues: MDTAELVALLHLASPALPIGAFSYSQGLEAALDAPLIRDADGARDWIASGLADVLAQGELPFLAHQLARWHAHDAAALADANDEFVASRESFELRRETEQMGWSLAQLCASLEWGDAARRATLASIPSVALPSAFAFAAAAHGATPDAALAAYAFGWVENQTAAAIKAVPLGQLAGQKIIVALREPIRDAVRRALATPPEAINTFAPQLGILSARHESQYSRLFRS.

It belongs to the UreF family. In terms of assembly, ureD, UreF and UreG form a complex that acts as a GTP-hydrolysis-dependent molecular chaperone, activating the urease apoprotein by helping to assemble the nickel containing metallocenter of UreC. The UreE protein probably delivers the nickel.

The protein resides in the cytoplasm. Required for maturation of urease via the functional incorporation of the urease nickel metallocenter. The sequence is that of Urease accessory protein UreF from Burkholderia mallei (strain NCTC 10247).